A 213-amino-acid polypeptide reads, in one-letter code: FMN-dependent NADH:quinone oxidoreductase (213 aa).

It belongs to the azoreductase type 1 family. As to quaternary structure, homodimer. Requires FMN as cofactor.

It carries out the reaction 2 a quinone + NADH + H(+) = 2 a 1,4-benzosemiquinone + NAD(+). The enzyme catalyses N,N-dimethyl-1,4-phenylenediamine + anthranilate + 2 NAD(+) = 2-(4-dimethylaminophenyl)diazenylbenzoate + 2 NADH + 2 H(+). Its function is as follows. Quinone reductase that provides resistance to thiol-specific stress caused by electrophilic quinones. In terms of biological role, also exhibits azoreductase activity. Catalyzes the reductive cleavage of the azo bond in aromatic azo compounds to the corresponding amines. The polypeptide is FMN-dependent NADH:quinone oxidoreductase (Streptococcus agalactiae serotype III (strain NEM316)).